The primary structure comprises 502 residues: ATP synthase subunit alpha (502 aa).

The interval 115 to 135 (VDGLGPINTTNTRPIESPAPG) is disordered. Residue 169-176 (GDRQTGKT) participates in ATP binding.

The protein belongs to the ATPase alpha/beta chains family. In terms of assembly, F-type ATPases have 2 components, CF(1) - the catalytic core - and CF(0) - the membrane proton channel. CF(1) has five subunits: alpha(3), beta(3), gamma(1), delta(1), epsilon(1). CF(0) has three main subunits: a(1), b(2) and c(9-12). The alpha and beta chains form an alternating ring which encloses part of the gamma chain. CF(1) is attached to CF(0) by a central stalk formed by the gamma and epsilon chains, while a peripheral stalk is formed by the delta and b chains.

The protein resides in the cell membrane. It carries out the reaction ATP + H2O + 4 H(+)(in) = ADP + phosphate + 5 H(+)(out). Functionally, produces ATP from ADP in the presence of a proton gradient across the membrane. The alpha chain is a regulatory subunit. In Bacillus mycoides (strain KBAB4) (Bacillus weihenstephanensis), this protein is ATP synthase subunit alpha.